A 338-amino-acid polypeptide reads, in one-letter code: Porphobilinogen deaminase (338 aa).

The residue at position 265 (C265) is an S-(dipyrrolylmethanemethyl)cysteine.

This sequence belongs to the HMBS family. The cofactor is dipyrromethane.

It carries out the reaction 4 porphobilinogen + H2O = hydroxymethylbilane + 4 NH4(+). It functions in the pathway porphyrin-containing compound metabolism; protoporphyrin-IX biosynthesis; coproporphyrinogen-III from 5-aminolevulinate: step 2/4. In terms of biological role, tetrapolymerization of the monopyrrole PBG into the hydroxymethylbilane pre-uroporphyrinogen in several discrete steps. The protein is Porphobilinogen deaminase (HEM3) of Yarrowia lipolytica (strain CLIB 122 / E 150) (Yeast).